A 307-amino-acid polypeptide reads, in one-letter code: D-alanine--D-alanine ligase (307 aa).

The ATP-grasp domain maps to 101-301 (KTVMRAAGVS…FGELVRWMVE (201 aa)). 127-182 (PLTPPYVVKPIAEGSSMGVIIVREERSHPPQILASDEWVYGEEVLAETYIAGRELT) provides a ligand contact to ATP. Mg(2+) contacts are provided by D251, E268, and N270.

Belongs to the D-alanine--D-alanine ligase family. The cofactor is Mg(2+). Mn(2+) serves as cofactor.

It is found in the cytoplasm. The enzyme catalyses 2 D-alanine + ATP = D-alanyl-D-alanine + ADP + phosphate + H(+). The protein operates within cell wall biogenesis; peptidoglycan biosynthesis. Its function is as follows. Cell wall formation. The sequence is that of D-alanine--D-alanine ligase from Methylorubrum populi (strain ATCC BAA-705 / NCIMB 13946 / BJ001) (Methylobacterium populi).